We begin with the raw amino-acid sequence, 199 residues long: NADH-quinone oxidoreductase subunit C (199 aa).

Belongs to the complex I 30 kDa subunit family. As to quaternary structure, NDH-1 is composed of 14 different subunits. Subunits NuoB, C, D, E, F, and G constitute the peripheral sector of the complex.

It is found in the cell inner membrane. The catalysed reaction is a quinone + NADH + 5 H(+)(in) = a quinol + NAD(+) + 4 H(+)(out). In terms of biological role, NDH-1 shuttles electrons from NADH, via FMN and iron-sulfur (Fe-S) centers, to quinones in the respiratory chain. The immediate electron acceptor for the enzyme in this species is believed to be ubiquinone. Couples the redox reaction to proton translocation (for every two electrons transferred, four hydrogen ions are translocated across the cytoplasmic membrane), and thus conserves the redox energy in a proton gradient. The sequence is that of NADH-quinone oxidoreductase subunit C from Cupriavidus pinatubonensis (strain JMP 134 / LMG 1197) (Cupriavidus necator (strain JMP 134)).